Reading from the N-terminus, the 98-residue chain is ESAT-6-like protein EsxJ (98 aa).

It belongs to the WXG100 family. CFP-10 subfamily.

Its subcellular location is the secreted. The polypeptide is ESAT-6-like protein EsxJ (Mycobacterium bovis (strain ATCC BAA-935 / AF2122/97)).